The following is a 61-amino-acid chain: Large ribosomal subunit protein bL32 (61 aa).

Positions 1–44 are disordered; that stretch reads MAVQQNRKSRSRRDMRRSHDALTENALTVDQTTGETHRRHHVTK. The span at 7 to 16 shows a compositional bias: basic residues; it reads RKSRSRRDMR. Polar residues predominate over residues 25–34; that stretch reads NALTVDQTTG.

This sequence belongs to the bacterial ribosomal protein bL32 family.

The sequence is that of Large ribosomal subunit protein bL32 from Acinetobacter baylyi (strain ATCC 33305 / BD413 / ADP1).